The primary structure comprises 39 residues: Cytochrome b559 subunit beta (39 aa).

A helical membrane pass occupies residues 14–30 (WLAVHGLAVPTVSFLGS). H18 provides a ligand contact to heme.

It belongs to the PsbE/PsbF family. In terms of assembly, heterodimer of an alpha subunit and a beta subunit. PSII is composed of 1 copy each of membrane proteins PsbA, PsbB, PsbC, PsbD, PsbE, PsbF, PsbH, PsbI, PsbJ, PsbK, PsbL, PsbM, PsbT, PsbX, PsbY, PsbZ, Psb30/Ycf12, at least 3 peripheral proteins of the oxygen-evolving complex and a large number of cofactors. It forms dimeric complexes. Heme b is required as a cofactor.

Its subcellular location is the plastid. The protein localises to the chloroplast thylakoid membrane. Functionally, this b-type cytochrome is tightly associated with the reaction center of photosystem II (PSII). PSII is a light-driven water:plastoquinone oxidoreductase that uses light energy to abstract electrons from H(2)O, generating O(2) and a proton gradient subsequently used for ATP formation. It consists of a core antenna complex that captures photons, and an electron transfer chain that converts photonic excitation into a charge separation. The protein is Cytochrome b559 subunit beta of Muilla maritima (Sea muilla).